Here is a 338-residue protein sequence, read N- to C-terminus: Glyceraldehyde-3-phosphate dehydrogenase 2 (338 aa).

NAD(+) contacts are provided by residues 12-13 (RI), Asp34, and Arg79. D-glyceraldehyde 3-phosphate-binding positions include 150 to 152 (SCT), Thr181, 210 to 211 (TG), and Arg233. Cys151 serves as the catalytic Nucleophile. Position 315 (Asn315) interacts with NAD(+).

This sequence belongs to the glyceraldehyde-3-phosphate dehydrogenase family. In terms of assembly, homotetramer.

It localises to the cytoplasm. The enzyme catalyses D-glyceraldehyde 3-phosphate + phosphate + NAD(+) = (2R)-3-phospho-glyceroyl phosphate + NADH + H(+). The protein operates within carbohydrate degradation; glycolysis; pyruvate from D-glyceraldehyde 3-phosphate: step 1/5. The sequence is that of Glyceraldehyde-3-phosphate dehydrogenase 2 (GPD2) from Mucor circinelloides f. lusitanicus (Mucor racemosus var. lusitanicus).